The sequence spans 192 residues: Akirin-1 (192 aa).

The tract at residues 17 to 71 (LLSPGSPKRRRCAPLPGPTPGLRPPDAEPPPPFQTQTPPQSLQQPAPPGSERRLP) is disordered. Residue S22 is modified to Phosphoserine. The Nuclear localization signal signature appears at 23 to 28 (PKRRRC). The span at 31-49 (LPGPTPGLRPPDAEPPPPF) shows a compositional bias: pro residues. Residues 50–60 (QTQTPPQSLQQ) show a composition bias toward low complexity. Residue T72 is modified to Phosphothreonine. Over residues 104–122 (ASESQPHSSALTAPSSPGS) the composition is skewed to polar residues. The segment at 104-127 (ASESQPHSSALTAPSSPGSSWMKK) is disordered. The SYVS motif motif lies at 189 to 192 (SYVS).

Belongs to the akirin family. As to expression, widely expressed with the highest expression in heart, liver, placenta and peripheral blood leukocytes.

The protein resides in the nucleus. Molecular adapter that acts as a bridge between proteins, and which is involved skeletal muscle development. Functions as a signal transducer for MSTN during skeletal muscle regeneration and myogenesis. May regulate chemotaxis of both macrophages and myoblasts by reorganising actin cytoskeleton, leading to more efficient lamellipodia formation via a PI3 kinase dependent pathway. In contrast to AKIRIN2, not involved in nuclear import of proteasomes. The protein is Akirin-1 of Homo sapiens (Human).